Here is a 508-residue protein sequence, read N- to C-terminus: Flagellin (508 aa).

It belongs to the bacterial flagellin family.

It is found in the secreted. The protein localises to the bacterial flagellum. Its function is as follows. Flagellin is the subunit protein which polymerizes to form the filaments of bacterial flagella. The sequence is that of Flagellin (fliC) from Salmonella oranienberg.